The sequence spans 140 residues: MKFAAVVVLAAAAAAVSAETNAQRMARGLPPKAPIRRHGTPADTEKRSHPSSTGGGQCNTGPIQCCNTVATSGSQSGVDELLTLLGLSVPVGTQVGASCSPISAVGTGSGAQCSGQTVCCEQNEWNGLVNIGCMPINLNA.

An N-terminal signal peptide occupies residues 1-18 (MKFAAVVVLAAAAAAVSA). The segment at 22-60 (AQRMARGLPPKAPIRRHGTPADTEKRSHPSSTGGGQCNT) is disordered. 4 cysteine pairs are disulfide-bonded: Cys-58/Cys-119, Cys-65/Cys-113, Cys-66/Cys-99, and Cys-120/Cys-133.

This sequence belongs to the fungal hydrophobin family. Self-assembles to form functional amyloid fibrils called rodlets. Self-assembly into fibrillar rodlets occurs spontaneously at hydrophobic:hydrophilic interfaces and the rodlets further associate laterally to form amphipathic monolayers.

It localises to the secreted. The protein resides in the cell wall. Functionally, aerial growth, conidiation, and dispersal of filamentous fungi in the environment rely upon a capability of their secreting small amphipathic proteins called hydrophobins (HPBs) with low sequence identity. Class I can self-assemble into an outermost layer of rodlet bundles on aerial cell surfaces, conferring cellular hydrophobicity that supports fungal growth, development and dispersal; whereas Class II form highly ordered films at water-air interfaces through intermolecular interactions but contribute nothing to the rodlet structure. The protein is Class I hydrophobin 1 of Pisolithus tinctorius (Dead man's foot).